The sequence spans 237 residues: Sugar fermentation stimulation protein homolog (237 aa).

The protein belongs to the SfsA family.

The sequence is that of Sugar fermentation stimulation protein homolog from Pseudomonas fluorescens (strain Pf0-1).